The following is a 481-amino-acid chain: Ammonium transporter 2 member 3 (481 aa).

Over 1-36 (MNFNSSKYISHLPESLLPNDASPEWNNKADNAWQLT) the chain is Extracellular. N-linked (GlcNAc...) asparagine glycosylation is present at asparagine 4. A helical transmembrane segment spans residues 37–57 (AATLVGLQTVPGLVILYGSMV). The Cytoplasmic portion of the chain corresponds to 58-62 (KKKWA). Residues 63-83 (VNSAFMALYAFAAVLVCWVLW) traverse the membrane as a helical segment. The Extracellular segment spans residues 84–123 (AHHMAFGTKLLPFVGKPNFALSQKFLLSKASTNYYLPMAD). Residues 124 to 144 (FVFYQFAFAAITLVLLGGSLL) form a helical membrane-spanning segment. The Cytoplasmic segment spans residues 145 to 151 (GRMNFYA). The helical transmembrane segment at 152 to 172 (WMLFVPLWLTLSYTVGAFTIW) threads the bilayer. Residues 173–184 (GNGFLEGKIIDY) are Extracellular-facing. Residues 185 to 205 (AGGFVIHLSSGVAGFTAAYWV) form a helical membrane-spanning segment. Residues 206–220 (GPRTSNDRQNFPPNN) are Cytoplasmic-facing. Residues 221–241 (IIHMLGGAGFLWMGWTGFNGG) form a helical membrane-spanning segment. The Extracellular segment spans residues 242 to 248 (APFQVGE). The chain crosses the membrane as a helical span at residues 249 to 269 (ITSLAIFNTHLCTATSILVWI). Topologically, residues 270–281 (SLDMAVYKKGSL) are cytoplasmic. Residues 282 to 302 (IGSVQGMMTGLVCITPGAGLV) traverse the membrane as a helical segment. The Extracellular portion of the chain corresponds to 303 to 304 (DP). Residues 305–325 (WAAILMGALSGSIPWYTMMVL) traverse the membrane as a helical segment. The Cytoplasmic segment spans residues 326–338 (HKKSPFFQSVDDT). Residues 339–359 (LGVFHTHAVAGILGGILSGVF) traverse the membrane as a helical segment. Over 360 to 363 (AKPK) the chain is Extracellular. The chain crosses the membrane as a helical span at residues 364–381 (LLRILYGPYGSGLLYSYF). At 382 to 395 (DDNIGQGIKQMWYQ) the chain is on the cytoplasmic side. The helical transmembrane segment at 396–416 (LLGAVFITIWNVVITSLICIL) threads the bilayer. Topologically, residues 417–481 (LNRFVNLRMQ…HSFPINKIDE (65 aa)) are extracellular.

The protein belongs to the ammonia transporter channel (TC 1.A.11.2) family. As to expression, mostly expressed in mycorrhizal roots. Also observed in the cortex and endodermis of non-mycorrhizal roots.

It is found in the cell membrane. Functionally, involved in ammonium transport. Required for arbuscular mycorrhizal (AM) symbiosis with AM fungi (e.g. Glomus versiforme and G.intraradices) in low nitrogen conditions. The protein is Ammonium transporter 2 member 3 of Medicago truncatula (Barrel medic).